The chain runs to 115 residues: Ig heavy chain V-III region W3082 (115 aa).

In terms of domain architecture, Ig-like spans 1–114 (EVKLEESGGG…WGQGTLVTVS (114 aa)). Cysteine 22 and cysteine 98 are disulfide-bonded.

The protein is Ig heavy chain V-III region W3082 of Mus musculus (Mouse).